The chain runs to 163 residues: Phosphopantetheine adenylyltransferase (163 aa).

Thr9 is a substrate binding site. Residues 9 to 10 (TF) and His17 each bind ATP. Positions 41, 76, and 90 each coordinate substrate. Residues 91-93 (GLR), Glu101, and 126-132 (YSFISST) contribute to the ATP site.

Belongs to the bacterial CoaD family. Homohexamer. Mg(2+) serves as cofactor.

The protein localises to the cytoplasm. It catalyses the reaction (R)-4'-phosphopantetheine + ATP + H(+) = 3'-dephospho-CoA + diphosphate. It functions in the pathway cofactor biosynthesis; coenzyme A biosynthesis; CoA from (R)-pantothenate: step 4/5. Functionally, reversibly transfers an adenylyl group from ATP to 4'-phosphopantetheine, yielding dephospho-CoA (dPCoA) and pyrophosphate. This chain is Phosphopantetheine adenylyltransferase, found in Dichelobacter nodosus (strain VCS1703A).